Here is a 649-residue protein sequence, read N- to C-terminus: tRNA-guanine(15) transglycosylase (649 aa).

D88 serves as the catalytic Nucleophile. Substrate-binding residues include D123 and A194. Zn(2+) is bound by residues C280, C282, and C285. Residues 573–648 (KYRIVIDSSV…VAATLRGGLK (76 aa)) enclose the PUA domain.

It belongs to the archaeosine tRNA-ribosyltransferase family. The cofactor is Zn(2+).

The enzyme catalyses guanosine(15) in tRNA + 7-cyano-7-deazaguanine = 7-cyano-7-carbaguanosine(15) in tRNA + guanine. The protein operates within tRNA modification; archaeosine-tRNA biosynthesis. Exchanges the guanine residue with 7-cyano-7-deazaguanine (preQ0) at position 15 in the dihydrouridine loop (D-loop) of archaeal tRNAs. This is tRNA-guanine(15) transglycosylase from Methanococcus maripaludis (strain DSM 14266 / JCM 13030 / NBRC 101832 / S2 / LL).